The primary structure comprises 503 residues: Cytochrome c-552 (503 aa).

The first 16 residues, 1–16, serve as a signal peptide directing secretion; it reads MKKNTIILVGALIAIA. His102 is a binding site for heme c. Positions 130, 133, and 134 each coordinate heme. Heme c-binding residues include Cys168, Cys171, His172, Cys210, Cys213, and His214. Residues Glu216, Tyr217, Lys273, and Gln275 each coordinate Ca(2+). Tyr217 is a substrate binding site. His276 serves as a coordination point for substrate. Heme c is bound by residues His287, Cys294, Cys297, His298, His312, Cys325, Cys328, His329, and His404.

This sequence belongs to the cytochrome c-552 family. Ca(2+) serves as cofactor. The cofactor is heme c.

It localises to the periplasm. The enzyme catalyses 6 Fe(III)-[cytochrome c] + NH4(+) + 2 H2O = 6 Fe(II)-[cytochrome c] + nitrite + 8 H(+). Its pathway is nitrogen metabolism; nitrate reduction (assimilation). Its function is as follows. Catalyzes the reduction of nitrite to ammonia, consuming six electrons in the process. The polypeptide is Cytochrome c-552 (Maridesulfovibrio salexigens (strain ATCC 14822 / DSM 2638 / NCIMB 8403 / VKM B-1763) (Desulfovibrio salexigens)).